A 983-amino-acid chain; its full sequence is ABC transporter A family member 2 (983 aa).

Transmembrane regions (helical) follow at residues 33 to 53 (FLQLFASFFFILLIFCIQAAM), 221 to 241 (IVALDTIGPTFFLAVAMFGFV), 279 to 299 (ILTAISALLTVLFGMMFQFDF), 305 to 325 (FPVVFLLFMLFQFNLIGLAFM), 339 to 359 (VGFFVFLVGFVTQLATSSGFP), and 416 to 436 (VLTINDIYLWLLGTFFLWFVL). The ABC transporter domain maps to 518–763 (VQIRGLAKTY…FGTGFIANIS (246 aa)). 564-571 (GPNGAGKT) is an ATP binding site. Residues 963–983 (RSGSTSSRRFSRSGSSRRFSS) are disordered.

This sequence belongs to the ABC transporter superfamily. ABCA family. CPR flippase (TC 3.A.1.211) subfamily.

It localises to the membrane. The protein is ABC transporter A family member 2 (ABCA2) of Arabidopsis thaliana (Mouse-ear cress).